The sequence spans 206 residues: ATP phosphoribosyltransferase (206 aa).

The protein belongs to the ATP phosphoribosyltransferase family. Short subfamily. Heteromultimer composed of HisG and HisZ subunits.

It localises to the cytoplasm. The catalysed reaction is 1-(5-phospho-beta-D-ribosyl)-ATP + diphosphate = 5-phospho-alpha-D-ribose 1-diphosphate + ATP. It participates in amino-acid biosynthesis; L-histidine biosynthesis; L-histidine from 5-phospho-alpha-D-ribose 1-diphosphate: step 1/9. Functionally, catalyzes the condensation of ATP and 5-phosphoribose 1-diphosphate to form N'-(5'-phosphoribosyl)-ATP (PR-ATP). Has a crucial role in the pathway because the rate of histidine biosynthesis seems to be controlled primarily by regulation of HisG enzymatic activity. The sequence is that of ATP phosphoribosyltransferase from Leptospira interrogans serogroup Icterohaemorrhagiae serovar copenhageni (strain Fiocruz L1-130).